The following is a 227-amino-acid chain: Tegument protein ORF55 (227 aa).

A lipid anchor (S-palmitoyl cysteine; by host) is attached at Cys11. The interval 183-227 is disordered; the sequence is VTRQPEATLPKPPTEDPSVSAMHSSIPPRPSSTLEETTESAIGST. Residues 213-227 are compositionally biased toward polar residues; that stretch reads SSTLEETTESAIGST.

It belongs to the herpesviridae UL51 family. Oligomerizes. Interacts with ORF42; this interaction mediates ORF42 incorporation to virions. Interacts with vBCL2. Phosphorylated. In terms of processing, palmitoylation is necessary for Golgi localization.

The protein resides in the virion tegument. It localises to the host cytoplasm. It is found in the host Golgi apparatus. Its function is as follows. Plays several roles during the time course of infection, including egress of virus particles from the perinuclear space and secondary envelopment of cytoplasmic capsids that bud into specific trans-Golgi network (TGN)-derived membranes. In Homo sapiens (Human), this protein is Tegument protein ORF55 (ORF55).